A 468-amino-acid polypeptide reads, in one-letter code: ATP synthase subunit beta (468 aa).

ATP is bound at residue 155 to 162 (GGAGVGKT).

Belongs to the ATPase alpha/beta chains family. As to quaternary structure, F-type ATPases have 2 components, CF(1) - the catalytic core - and CF(0) - the membrane proton channel. CF(1) has five subunits: alpha(3), beta(3), gamma(1), delta(1), epsilon(1). CF(0) has three main subunits: a(1), b(2) and c(9-12). The alpha and beta chains form an alternating ring which encloses part of the gamma chain. CF(1) is attached to CF(0) by a central stalk formed by the gamma and epsilon chains, while a peripheral stalk is formed by the delta and b chains.

It is found in the cell membrane. The catalysed reaction is ATP + H2O + 4 H(+)(in) = ADP + phosphate + 5 H(+)(out). In terms of biological role, produces ATP from ADP in the presence of a proton gradient across the membrane. The catalytic sites are hosted primarily by the beta subunits. The sequence is that of ATP synthase subunit beta from Streptococcus pyogenes serotype M6 (strain ATCC BAA-946 / MGAS10394).